The sequence spans 306 residues: Plant-type L-asparaginase (306 aa).

The active-site Nucleophile is the threonine 176. Substrate contacts are provided by residues 203–206 (RVGD) and 225–228 (TGLG).

The protein belongs to the Ntn-hydrolase family. Heterotetramer of two alpha and two beta chains arranged as a dimer of alpha/beta heterodimers. The uncleaved protein forms homodimers. Autocleaved. Generates the alpha and beta subunits. The N-terminal residue of the beta subunit is thought to be responsible for the nucleophile hydrolase activity. Predominantly produced in the uncleaved form when gene expression is induced at 37 degrees Celsius with 0.5 mM IPTG. When produced at 42 degrees Celsius without adding IPTG, approximately 90% of the protein is found in the cleaved form, while the remaining 10% is observed as uncleaved precursor. Undergoes complete auto-cleavage within 24 hours at 37 degrees Celsius.

It carries out the reaction L-asparagine + H2O = L-aspartate + NH4(+). With respect to regulation, undergoes auto-cleavage in a temperature-dependent and glycine-independent manner. Metal ions and EDTA do not have any significant effect on enzyme activity, indicating that activity is metal-independent. In terms of biological role, catalyzes the hydrolysis of L-asparagine into L-aspartate and ammonia. Also displays D-asparaginase activity, which is about 10% of the L-asparaginase activity. Does not exhibit glutaminase activity. The chain is Plant-type L-asparaginase from Thermococcus kodakarensis (strain ATCC BAA-918 / JCM 12380 / KOD1) (Pyrococcus kodakaraensis (strain KOD1)).